Consider the following 226-residue polypeptide: Ribonuclease S-7 (226 aa).

A signal peptide spans 1-27 (MGITGMIYIVTMVFSLIVLILSSSTVG). Residue glutamine 36 participates in RNA binding. Cysteines 42 and 49 form a disulfide. Position 60 (histidine 60) interacts with RNA. Histidine 60 (proton donor) is an active-site residue. N-linked (GlcNAc...) asparagine; alternate glycosylation is found at asparagine 74 and asparagine 77. Residues cysteine 75 and cysteine 119 are joined by a disulfide bond. RNA contacts are provided by residues 98–99 (NV), phenylalanine 108, 111–112 (KQ), and 115–116 (KH). Residue glutamine 112 is part of the active site. The active-site Proton acceptor is the histidine 116. N-linked (GlcNAc...) asparagine glycans are attached at residues asparagine 126, asparagine 144, and asparagine 172. Intrachain disulfides connect cysteine 183-cysteine 220 and cysteine 198-cysteine 209.

The protein belongs to the RNase T2 family. In terms of processing, the N-glycans attached at Asn-74 and Asn-77 consist of either monosaccharide (GlcNAc) or disaccharide (GlcNAc-GlcNAc) that could not be distinguished. The N-glycan at Asn-144 contains mannose and xylose, and at Asn-126 contains mannose, xylose and fucose. The N-glycan at Asn-172 consists of disaccharide (GlcNAc-GlcNAc).

The enzyme catalyses a ribonucleotidyl-ribonucleotide-RNA + H2O = a 3'-end 3'-phospho-ribonucleotide-RNA + a 5'-end dephospho-ribonucleoside-RNA + H(+). Its function is as follows. Self-incompatibility (SI) is the inherited ability of a flowering plant to prevent self-fertilization by discriminating between self and non-self pollen during pollination. In many species, self-incompatibility is controlled by the single, multiallelic locus S. The polypeptide is Ribonuclease S-7 (Pyrus pyrifolia (Chinese pear)).